Here is a 300-residue protein sequence, read N- to C-terminus: GTP-binding protein At2g22870 (300 aa).

The EngB-type G domain maps to 119 to 297 (DRPEIAILGR…LLHMSQLRNY (179 aa)). GTP-binding positions include 127–134 (GRSNVGKS), 154–158 (GKTQL), 172–175 (DLPG), 239–242 (TKCD), and 276–278 (TSS). Mg(2+) contacts are provided by S134 and T156.

Belongs to the TRAFAC class TrmE-Era-EngA-EngB-Septin-like GTPase superfamily. EngB GTPase family. Mg(2+) serves as cofactor.

In Arabidopsis thaliana (Mouse-ear cress), this protein is GTP-binding protein At2g22870 (EMB2001).